Reading from the N-terminus, the 473-residue chain is GTPase Der (473 aa).

2 EngA-type G domains span residues 3–166 (PVIA…ENPE) and 177–350 (IRIG…ESAM). GTP is bound by residues 9 to 16 (GRPNVGKS), 56 to 60 (DTGGL), 118 to 121 (NKTD), 183 to 190 (GRPNVGKS), 230 to 234 (DTAGV), and 295 to 298 (NKWD). Positions 351 to 435 (SKWPTNRLTA…PIRFEFKSGE (85 aa)) constitute a KH-like domain. The span at 444 to 458 (RLTPRQKVKKDNDLK) shows a compositional bias: basic and acidic residues. Positions 444–473 (RLTPRQKVKKDNDLKKGRRIKKTRQKSVKR) are disordered. A compositionally biased stretch (basic residues) spans 459–473 (KGRRIKKTRQKSVKR).

Belongs to the TRAFAC class TrmE-Era-EngA-EngB-Septin-like GTPase superfamily. EngA (Der) GTPase family. As to quaternary structure, associates with the 50S ribosomal subunit.

In terms of biological role, GTPase that plays an essential role in the late steps of ribosome biogenesis. This is GTPase Der from Marinobacter nauticus (strain ATCC 700491 / DSM 11845 / VT8) (Marinobacter aquaeolei).